We begin with the raw amino-acid sequence, 231 residues long: 2-C-methyl-D-erythritol 4-phosphate cytidylyltransferase (231 aa).

This sequence belongs to the IspD/TarI cytidylyltransferase family. IspD subfamily.

The catalysed reaction is 2-C-methyl-D-erythritol 4-phosphate + CTP + H(+) = 4-CDP-2-C-methyl-D-erythritol + diphosphate. The protein operates within isoprenoid biosynthesis; isopentenyl diphosphate biosynthesis via DXP pathway; isopentenyl diphosphate from 1-deoxy-D-xylulose 5-phosphate: step 2/6. Functionally, catalyzes the formation of 4-diphosphocytidyl-2-C-methyl-D-erythritol from CTP and 2-C-methyl-D-erythritol 4-phosphate (MEP). The protein is 2-C-methyl-D-erythritol 4-phosphate cytidylyltransferase of Rubrobacter xylanophilus (strain DSM 9941 / JCM 11954 / NBRC 16129 / PRD-1).